The sequence spans 176 residues: RNA pyrophosphohydrolase (176 aa).

The 144-residue stretch at 6–149 (GYRPNVGIVI…KRDVYRRVMK (144 aa)) folds into the Nudix hydrolase domain. The short motif at 38-59 (GGINPGESAEQAMYRELFEEVG) is the Nudix box element.

It belongs to the Nudix hydrolase family. RppH subfamily. Requires a divalent metal cation as cofactor.

In terms of biological role, accelerates the degradation of transcripts by removing pyrophosphate from the 5'-end of triphosphorylated RNA, leading to a more labile monophosphorylated state that can stimulate subsequent ribonuclease cleavage. The chain is RNA pyrophosphohydrolase from Salmonella paratyphi C (strain RKS4594).